The sequence spans 180 residues: Ribosome maturation factor RimM (180 aa).

The PRC barrel domain occupies 99-172; the sequence is EDEFYQVDLI…FLVVDPVAAG (74 aa).

This sequence belongs to the RimM family. In terms of assembly, binds ribosomal protein uS19.

The protein resides in the cytoplasm. In terms of biological role, an accessory protein needed during the final step in the assembly of 30S ribosomal subunit, possibly for assembly of the head region. Essential for efficient processing of 16S rRNA. May be needed both before and after RbfA during the maturation of 16S rRNA. It has affinity for free ribosomal 30S subunits but not for 70S ribosomes. The chain is Ribosome maturation factor RimM from Bartonella henselae (strain ATCC 49882 / DSM 28221 / CCUG 30454 / Houston 1) (Rochalimaea henselae).